The sequence spans 88 residues: UPF0297 protein BLi02868/BL02032 (88 aa).

It belongs to the UPF0297 family.

The chain is UPF0297 protein BLi02868/BL02032 from Bacillus licheniformis (strain ATCC 14580 / DSM 13 / JCM 2505 / CCUG 7422 / NBRC 12200 / NCIMB 9375 / NCTC 10341 / NRRL NRS-1264 / Gibson 46).